The following is a 274-amino-acid chain: Urease accessory protein UreD (274 aa).

Belongs to the UreD family. As to quaternary structure, ureD, UreF and UreG form a complex that acts as a GTP-hydrolysis-dependent molecular chaperone, activating the urease apoprotein by helping to assemble the nickel containing metallocenter of UreC. The UreE protein probably delivers the nickel.

The protein resides in the cytoplasm. In terms of biological role, required for maturation of urease via the functional incorporation of the urease nickel metallocenter. The polypeptide is Urease accessory protein UreD (Klebsiella pneumoniae subsp. pneumoniae (strain ATCC 700721 / MGH 78578)).